The primary structure comprises 219 residues: MIDVRKYIDNAALKPHLSEKEIEEFVLKSEELGIYAVCVNPYHVKLASSIAKKVKVCCVIGFPLGLNKTSVKVKEAVEAVRDGAQELDIVWNLSAFKSEKYDFVVEELKEIFRETPSAVHKVIVETPYLNEEEIKKAVEICIEAGADFIKTSTGFAPRGTTLEEVRLIKSSAKGRIKVKASGGIRDLETAISMIEAGADRIGTSSGISIAEEFLKRHLI.

The active-site Proton donor/acceptor is the Asp88. Lys150 acts as the Schiff-base intermediate with acetaldehyde in catalysis. The active-site Proton donor/acceptor is Lys179.

It belongs to the DeoC/FbaB aldolase family. DeoC type 1 subfamily.

It is found in the cytoplasm. The enzyme catalyses 2-deoxy-D-ribose 5-phosphate = D-glyceraldehyde 3-phosphate + acetaldehyde. Its pathway is carbohydrate degradation; 2-deoxy-D-ribose 1-phosphate degradation; D-glyceraldehyde 3-phosphate and acetaldehyde from 2-deoxy-alpha-D-ribose 1-phosphate: step 2/2. In terms of biological role, catalyzes a reversible aldol reaction between acetaldehyde and D-glyceraldehyde 3-phosphate to generate 2-deoxy-D-ribose 5-phosphate. The sequence is that of Deoxyribose-phosphate aldolase from Aquifex aeolicus (strain VF5).